A 72-amino-acid polypeptide reads, in one-letter code: Translation initiation factor IF-1 (72 aa).

The region spanning 1 to 72 (MAKSDVIEVD…DKGRITYRYK (72 aa)) is the S1-like domain.

This sequence belongs to the IF-1 family. Component of the 30S ribosomal translation pre-initiation complex which assembles on the 30S ribosome in the order IF-2 and IF-3, IF-1 and N-formylmethionyl-tRNA(fMet); mRNA recruitment can occur at any time during PIC assembly.

It localises to the cytoplasm. Its function is as follows. One of the essential components for the initiation of protein synthesis. Stabilizes the binding of IF-2 and IF-3 on the 30S subunit to which N-formylmethionyl-tRNA(fMet) subsequently binds. Helps modulate mRNA selection, yielding the 30S pre-initiation complex (PIC). Upon addition of the 50S ribosomal subunit IF-1, IF-2 and IF-3 are released leaving the mature 70S translation initiation complex. The chain is Translation initiation factor IF-1 from Sulfurimonas denitrificans (strain ATCC 33889 / DSM 1251) (Thiomicrospira denitrificans (strain ATCC 33889 / DSM 1251)).